Consider the following 57-residue polypeptide: Peptide BmKa1 (57 aa).

The signal sequence occupies residues 1-22 (MKPRVFFLLFLLVAAMIETGES). Acidic residues-rich tracts occupy residues 20–29 (GESEENEEGS) and 45–57 (VDNEDSDIDGDSD). Residues 20 to 57 (GESEENEEGSNESGKSTEAKNTDASVDNEDSDIDGDSD) are disordered.

Belongs to the non-disulfide-bridged peptide (NDBP) superfamily. In terms of tissue distribution, expressed by the venom gland.

The protein localises to the secreted. The polypeptide is Peptide BmKa1 (Olivierus martensii (Manchurian scorpion)).